The chain runs to 167 residues: Peptide deformylase (167 aa).

Cys91 and His133 together coordinate Fe cation. Glu134 is an active-site residue. Residue His137 coordinates Fe cation.

Belongs to the polypeptide deformylase family. Requires Fe(2+) as cofactor.

The enzyme catalyses N-terminal N-formyl-L-methionyl-[peptide] + H2O = N-terminal L-methionyl-[peptide] + formate. Its function is as follows. Removes the formyl group from the N-terminal Met of newly synthesized proteins. Requires at least a dipeptide for an efficient rate of reaction. N-terminal L-methionine is a prerequisite for activity but the enzyme has broad specificity at other positions. The chain is Peptide deformylase from Chromobacterium violaceum (strain ATCC 12472 / DSM 30191 / JCM 1249 / CCUG 213 / NBRC 12614 / NCIMB 9131 / NCTC 9757 / MK).